A 101-amino-acid polypeptide reads, in one-letter code: UPF0235 protein MmarC5_0538 (101 aa).

Belongs to the UPF0235 family.

In Methanococcus maripaludis (strain C5 / ATCC BAA-1333), this protein is UPF0235 protein MmarC5_0538.